The primary structure comprises 142 residues: PDZ domain-containing protein 11 (142 aa).

One can recognise a PDZ domain in the interval 49–131 (TIVLKKPPGA…ILMKVRYFPY (83 aa)).

Its subcellular location is the cytoplasm. In Danio rerio (Zebrafish), this protein is PDZ domain-containing protein 11 (pdzd11).